We begin with the raw amino-acid sequence, 852 residues long: Bifunctional heparan sulfate N-deacetylase/N-sulfotransferase 1 (852 aa).

At 1–13 (MIITPYLNRKITR) the chain is on the cytoplasmic side. Residues 14 to 34 (PLKWILALIFLYLIYICLFSN) traverse the membrane as a helical; Signal-anchor for type II membrane protein segment. The tract at residues 34 to 574 (NNSKPPKPRK…PRHHAILPPS (541 aa)) is heparan sulfate N-deacetylase 1. The Lumenal segment spans residues 35-852 (NSKPPKPRKK…WLEESVRIRA (818 aa)). Residues N50, N72, N261, N328, N377, N428, and N576 are each glycosylated (N-linked (GlcNAc...) asparagine). The interval 575–852 (INCTKKSLPD…WLEESVRIRA (278 aa)) is heparan sulfate N-sulfotransferase 1. The active-site For sulfotransferase activity is the K592. 592 to 596 (KTGST) is a 3'-phosphoadenylyl sulfate binding site. N-linked (GlcNAc...) asparagine glycosylation is present at N607. S686 serves as a coordination point for 3'-phosphoadenylyl sulfate. N712 carries N-linked (GlcNAc...) asparagine glycosylation. C789 and C798 are oxidised to a cystine. 803-807 (KGRKY) is a binding site for 3'-phosphoadenylyl sulfate.

The protein belongs to the sulfotransferase 1 family. NDST subfamily. Monomer. In terms of tissue distribution, present in some specific neurons in head and tail regions and muscles.

The protein resides in the golgi apparatus membrane. It catalyses the reaction alpha-D-glucosaminyl-[heparan sulfate](n) + 3'-phosphoadenylyl sulfate = N-sulfo-alpha-D-glucosaminyl-[heparan sulfate](n) + adenosine 3',5'-bisphosphate + 2 H(+). It functions in the pathway glycan metabolism; heparan sulfate biosynthesis. Its pathway is glycan metabolism; heparin biosynthesis. Functionally, essential bifunctional enzyme that catalyzes both the N-deacetylation and the N-sulfation of glucosamine (GlcNAc) of the glycosaminoglycan in heparan sulfate. Modifies the GlcNAc-GlcA disaccharide repeating sugar backbone to make N-sulfated heparosan, a prerequisite substrate for later modifications in heparin biosynthesis. The chain is Bifunctional heparan sulfate N-deacetylase/N-sulfotransferase 1 (hst-1) from Caenorhabditis elegans.